The chain runs to 385 residues: MNHLRAEGPASVLAIGTANPENILIQDEFPDYYFRVTKSEHMTQLKEKFRKICDKSMIRKRNCFLNEEHLKQNPRLVEHEMQTLDARQDMLVVEVPKLGKDACAKAIKEWGQPKSKITHLIFTSASTTDMPGADYHCAKLLGLSPSVKRVMMYQLGCYGGGTVLRIAKDIAENNKGARVLAVCCDIMACLFRGPSDSDLELLVGQAIFGDGAAAVIVGAEPDESVGERPIFELVSTGQTILPNSEGTIGGHIREAGLIFDLHKDVPMLISNNIEKCLIEAFTPIGISDWNSIFWITHPGGKAILDKVEEKLDLKKEKFVDSRHVLSEHGNMSSSTVLFVMDELRKRSLEEGKSTTGDGFEWGVLFGFGPGLTVERVVVRSVPIKY.

C157 is an active-site residue.

The protein belongs to the thiolase-like superfamily. Chalcone/stilbene synthases family. Expressed in glandular trichomes.

It localises to the cytoplasm. Its function is as follows. Polyketide synthase responsible for the biosynthesis of secondary metabolites. The polypeptide is Polyketide synthase 4 (PKSG4) (Cannabis sativa (Hemp)).